The chain runs to 350 residues: Transmembrane protein 185A (350 aa).

7 helical membrane passes run 16–36, 41–61, 81–101, 111–131, 177–197, 211–231, and 240–260; these read LIYA…DGII, WAVF…ASVG, FKAM…EVLV, FWLL…AACV, ILMS…VLFL, ITMA…EILL, and AFSC…LMAT. The interval 298 to 350 is mediates interaction with MAP1B; it reads DLHHEDNEETEETPVPEPPKIAPMFRKKARVVITQSPGKYVLPPPKLNIEMPD.

Belongs to the TMEM185 family. In terms of assembly, interacts with MAP1B.

It localises to the cell projection. The protein localises to the dendrite. Its subcellular location is the membrane. This chain is Transmembrane protein 185A (TMEM185A), found in Homo sapiens (Human).